The sequence spans 380 residues: Chaperone protein DnaJ (380 aa).

The J domain maps to 5–70 (DFYETLGVSK…QKRAAYDRFG (66 aa)). Residues 141–219 (GKTAQIRVPT…CHGQGRVTEE (79 aa)) form a CR-type zinc finger. Zn(2+) contacts are provided by C154, C157, C171, C174, C193, C196, C207, and C210. CXXCXGXG motif repeat units lie at residues 154-161 (CEVCSGSG), 171-178 (CATCQGSG), 193-200 (CPTCQGRG), and 207-214 (CGKCHGQG).

It belongs to the DnaJ family. As to quaternary structure, homodimer. It depends on Zn(2+) as a cofactor.

The protein localises to the cytoplasm. Its function is as follows. Participates actively in the response to hyperosmotic and heat shock by preventing the aggregation of stress-denatured proteins and by disaggregating proteins, also in an autonomous, DnaK-independent fashion. Unfolded proteins bind initially to DnaJ; upon interaction with the DnaJ-bound protein, DnaK hydrolyzes its bound ATP, resulting in the formation of a stable complex. GrpE releases ADP from DnaK; ATP binding to DnaK triggers the release of the substrate protein, thus completing the reaction cycle. Several rounds of ATP-dependent interactions between DnaJ, DnaK and GrpE are required for fully efficient folding. Also involved, together with DnaK and GrpE, in the DNA replication of plasmids through activation of initiation proteins. This Allorhizobium ampelinum (strain ATCC BAA-846 / DSM 112012 / S4) (Agrobacterium vitis (strain S4)) protein is Chaperone protein DnaJ.